Here is a 160-residue protein sequence, read N- to C-terminus: Interleukin-36 alpha (160 aa).

Positions 1–7 are excised as a propeptide; the sequence is MNKEKEL. Tyr-98 is modified (3'-nitrotyrosine).

It belongs to the IL-1 family. As to quaternary structure, interacts with TMED10; the interaction mediates the translocation from the cytoplasm into the ERGIC (endoplasmic reticulum-Golgi intermediate compartment) and thereby secretion. N-terminal truncation leads to a dramatic enhancement of its activity (&gt;1000-fold). As to expression, highly expressed in embryonic tissue and in tissues containing epithelial cells. Elevated expression levels are detected in chronic kidney disease; expressed inepithelia from the distal convoluted tubules (DCTs) to the cortical collecting ducts (CCDs) in single nephrons (at protein level).

It is found in the cytoplasm. The protein localises to the secreted. Cytokine that binds to and signals through the IL1RL2/IL-36R receptor which in turn activates NF-kappa-B and MAPK signaling pathways in target cells linked to a pro-inflammatory response. Part of the IL-36 signaling system that is thought to be present in epithelial barriers and to take part in local inflammatory response; similar to the IL-1 system with which it shares the coreceptor IL1RAP. Seems to be involved in skin inflammatory response by acting on keratinocytes, dendritic cells and indirectly on T-cells to drive tissue infiltration, cell maturation and cell proliferation. Induces the production of pro-inflammatory cytokines, including IL-12, Il-1 beta, IL-6, TNF-alpha and IL-23 in bone marrow-derived dendritic cells (BMDCs). Involved in dendritic cell maturation by stimulating the surface expression of CD80, CD86 and MHC class II. Induces the production of IFN-gamma, IL-4 and IL-17 by cultured CD4(+) T-cells and splenocytes. May play a role in pro-inflammatory effects in the lung: induces the expression of CXCL1 and CXCL2 in the lung, and the expression of TNF-alpha, IL-36c, IL-1A, IL-1B, CXCL1 and CXCL2 in isolated splenic CD11c(+) alveolar macrophages. May be involved in T-cell maturation by stimulating the surface expression of CD40 and modestly CD80 and CD86 in splenic CD11c(+) cells. May be involved in CD4(+) T-cell proliferation. Induces NF-kappa B activation in macrophages. The chain is Interleukin-36 alpha from Mus musculus (Mouse).